The following is a 471-amino-acid chain: BPI fold-containing family B member 1 (471 aa).

The N-terminal stretch at 1 to 18 (MTNPWIVSLLLGATLVQA) is a signal peptide. N-linked (GlcNAc...) asparagine glycans are attached at residues Asn150, Asn157, Asn260, and Asn397. Cys154 and Cys197 are disulfide-bonded.

The protein belongs to the BPI/LBP/Plunc superfamily. Plunc family.

Its subcellular location is the secreted. May play a role in innate immunity in mouth, nose and lungs. Binds bacterial lipopolysaccharide (LPS) and modulates the cellular responses to LPS. This Rattus norvegicus (Rat) protein is BPI fold-containing family B member 1 (Bpifb1).